A 295-amino-acid chain; its full sequence is Protease Rv3090 (295 aa).

2 helical membrane-spanning segments follow: residues 2–22 (TWQI…ALFW) and 37–57 (VTIA…FTIV).

The protein resides in the cell membrane. Its subcellular location is the secreted. The protein localises to the cell wall. Functionally, protease that triggers late cell apoptosis and contributes to the pathogenicity and dissemination of M.tuberculosis. In a mouse model of infection, can induce hepatocyte and lung cell apoptosis and cause pathological damage to the spleen, liver and lungs. Specifically stimulates the secretion of inflammatory cytokines including TNF-alpha, IL-6 and IL-1 beta. Can degrade casein in vitro. The sequence is that of Protease Rv3090 from Mycobacterium tuberculosis (strain ATCC 25618 / H37Rv).